Here is a 142-residue protein sequence, read N- to C-terminus: Large ribosomal subunit protein uL13 (142 aa).

Belongs to the universal ribosomal protein uL13 family. In terms of assembly, part of the 50S ribosomal subunit.

Functionally, this protein is one of the early assembly proteins of the 50S ribosomal subunit, although it is not seen to bind rRNA by itself. It is important during the early stages of 50S assembly. This is Large ribosomal subunit protein uL13 from Stenotrophomonas maltophilia (strain R551-3).